A 195-amino-acid polypeptide reads, in one-letter code: Imidazoleglycerol-phosphate dehydratase (195 aa).

It belongs to the imidazoleglycerol-phosphate dehydratase family.

The protein localises to the cytoplasm. The enzyme catalyses D-erythro-1-(imidazol-4-yl)glycerol 3-phosphate = 3-(imidazol-4-yl)-2-oxopropyl phosphate + H2O. It functions in the pathway amino-acid biosynthesis; L-histidine biosynthesis; L-histidine from 5-phospho-alpha-D-ribose 1-diphosphate: step 6/9. The protein is Imidazoleglycerol-phosphate dehydratase of Bordetella petrii (strain ATCC BAA-461 / DSM 12804 / CCUG 43448).